A 101-amino-acid polypeptide reads, in one-letter code: Small ribosomal subunit protein uS14 (101 aa).

The protein belongs to the universal ribosomal protein uS14 family. As to quaternary structure, part of the 30S ribosomal subunit. Contacts proteins S3 and S10.

Functionally, binds 16S rRNA, required for the assembly of 30S particles and may also be responsible for determining the conformation of the 16S rRNA at the A site. This Haemophilus ducreyi (strain 35000HP / ATCC 700724) protein is Small ribosomal subunit protein uS14.